Reading from the N-terminus, the 97-residue chain is Aspartyl/glutamyl-tRNA(Asn/Gln) amidotransferase subunit C (97 aa).

The disordered stretch occupies residues leucine 58–leucine 78. Basic and acidic residues predominate over residues leucine 63–alanine 77.

It belongs to the GatC family. In terms of assembly, heterotrimer of A, B and C subunits.

The enzyme catalyses L-glutamyl-tRNA(Gln) + L-glutamine + ATP + H2O = L-glutaminyl-tRNA(Gln) + L-glutamate + ADP + phosphate + H(+). The catalysed reaction is L-aspartyl-tRNA(Asn) + L-glutamine + ATP + H2O = L-asparaginyl-tRNA(Asn) + L-glutamate + ADP + phosphate + 2 H(+). Its function is as follows. Allows the formation of correctly charged Asn-tRNA(Asn) or Gln-tRNA(Gln) through the transamidation of misacylated Asp-tRNA(Asn) or Glu-tRNA(Gln) in organisms which lack either or both of asparaginyl-tRNA or glutaminyl-tRNA synthetases. The reaction takes place in the presence of glutamine and ATP through an activated phospho-Asp-tRNA(Asn) or phospho-Glu-tRNA(Gln). In Saccharolobus islandicus (strain Y.N.15.51 / Yellowstone #2) (Sulfolobus islandicus), this protein is Aspartyl/glutamyl-tRNA(Asn/Gln) amidotransferase subunit C.